Consider the following 485-residue polypeptide: Glutamyl-tRNA(Gln) amidotransferase subunit A (485 aa).

Active-site charge relay system residues include K79 and S154. Residue S178 is the Acyl-ester intermediate of the active site.

It belongs to the amidase family. GatA subfamily. Heterotrimer of A, B and C subunits.

The enzyme catalyses L-glutamyl-tRNA(Gln) + L-glutamine + ATP + H2O = L-glutaminyl-tRNA(Gln) + L-glutamate + ADP + phosphate + H(+). Functionally, allows the formation of correctly charged Gln-tRNA(Gln) through the transamidation of misacylated Glu-tRNA(Gln) in organisms which lack glutaminyl-tRNA synthetase. The reaction takes place in the presence of glutamine and ATP through an activated gamma-phospho-Glu-tRNA(Gln). The protein is Glutamyl-tRNA(Gln) amidotransferase subunit A of Clostridium botulinum (strain ATCC 19397 / Type A).